Consider the following 466-residue polypeptide: L-seryl-tRNA(Sec) selenium transferase (466 aa).

Position 292 is an N6-(pyridoxal phosphate)lysine (Lys-292).

It belongs to the SelA family. The cofactor is pyridoxal 5'-phosphate.

Its subcellular location is the cytoplasm. The enzyme catalyses L-seryl-tRNA(Sec) + selenophosphate + H(+) = L-selenocysteinyl-tRNA(Sec) + phosphate. The protein operates within aminoacyl-tRNA biosynthesis; selenocysteinyl-tRNA(Sec) biosynthesis; selenocysteinyl-tRNA(Sec) from L-seryl-tRNA(Sec) (bacterial route): step 1/1. In terms of biological role, converts seryl-tRNA(Sec) to selenocysteinyl-tRNA(Sec) required for selenoprotein biosynthesis. In Rhizobium meliloti (strain 1021) (Ensifer meliloti), this protein is L-seryl-tRNA(Sec) selenium transferase.